A 211-amino-acid chain; its full sequence is Redox-sensing transcriptional repressor Rex (211 aa).

Positions 17 to 56 (LYYRFVSSLKSKGIDRVNSKAISDALQIDSATIRRDFSYF) form a DNA-binding region, H-T-H motif. NAD(+) is bound at residue 91 to 96 (GVGNLG).

The protein belongs to the transcriptional regulatory Rex family. As to quaternary structure, homodimer.

The protein resides in the cytoplasm. Functionally, modulates transcription in response to changes in cellular NADH/NAD(+) redox state. This chain is Redox-sensing transcriptional repressor Rex, found in Staphylococcus aureus (strain Mu3 / ATCC 700698).